Here is a 47-residue protein sequence, read N- to C-terminus: Large ribosomal subunit protein bL27c-2 (47 aa).

The protein belongs to the bacterial ribosomal protein bL27 family.

It localises to the plastid. The protein resides in the chloroplast. This Cyanidium caldarium (Red alga) protein is Large ribosomal subunit protein bL27c-2.